Reading from the N-terminus, the 333-residue chain is MSQSLLAQLRKMTTVVADTGDIQAIEKVRPQDATTNPSLITAAAGMPAYQKIVDDTLLDAKKQLGDSAPSDKVAKLAFENLAVAFGKQILAIIPGRVSTEVDARLSYDTEATIKQAHAIIEKYQKQGIGRERVLIKIASTWEGIRAAEQLEKEGIHCNLTLLFGMHQAVACAEAGVTLISPFVGRILDWYKKDTGKDYVGADDPGVQSVTRIYNYFKKFGYKTVVMGASFRNTGEIIELAGCDLLTISPKLLEELDAKEAELPRKLDAEKAKGMEIERITVDKATFDKMHAEDRMAHDKLKEGIEGFSEALENLEKLLAKRLEELSAEPVGAK.

Catalysis depends on lysine 136, which acts as the Schiff-base intermediate with substrate.

This sequence belongs to the transaldolase family. Type 1 subfamily. In terms of assembly, homodimer.

Its subcellular location is the cytoplasm. The catalysed reaction is D-sedoheptulose 7-phosphate + D-glyceraldehyde 3-phosphate = D-erythrose 4-phosphate + beta-D-fructose 6-phosphate. It participates in carbohydrate degradation; pentose phosphate pathway; D-glyceraldehyde 3-phosphate and beta-D-fructose 6-phosphate from D-ribose 5-phosphate and D-xylulose 5-phosphate (non-oxidative stage): step 2/3. Functionally, transaldolase is important for the balance of metabolites in the pentose-phosphate pathway. The chain is Transaldolase from Acidobacterium capsulatum (strain ATCC 51196 / DSM 11244 / BCRC 80197 / JCM 7670 / NBRC 15755 / NCIMB 13165 / 161).